We begin with the raw amino-acid sequence, 668 residues long: Ecdysone oxidase (668 aa).

FAD-binding positions include 137–140, valine 270, and 536–537; these read NHMV and WH. Histidine 537 functions as the Proton acceptor in the catalytic mechanism.

The protein belongs to the GMC oxidoreductase family. Requires FAD as cofactor.

The enzyme catalyses ecdysone + O2 = 3-dehydroecdysone + H2O2. Functionally, involved in the inactivation of ecdysteroid molting hormones by converting ecdysteroids into 3-dehydroecdysteroids. The sequence is that of Ecdysone oxidase from Bombyx mori (Silk moth).